A 592-amino-acid chain; its full sequence is A-type ATP synthase subunit A (592 aa).

ATP is bound at residue 234 to 241 (GGFGTGKT).

The protein belongs to the ATPase alpha/beta chains family. Has multiple subunits with at least A(3), B(3), C, D, E, F, H, I and proteolipid K(x).

The protein localises to the cell membrane. The catalysed reaction is ATP + H2O + 4 H(+)(in) = ADP + phosphate + 5 H(+)(out). In terms of biological role, component of the A-type ATP synthase that produces ATP from ADP in the presence of a proton gradient across the membrane. The A chain is the catalytic subunit. This is A-type ATP synthase subunit A from Cenarchaeum symbiosum (strain A).